The primary structure comprises 227 residues: Small ribosomal subunit protein uS3 (227 aa).

One can recognise a KH type-2 domain in the interval valine 39–arginine 107.

The protein belongs to the universal ribosomal protein uS3 family. Part of the 30S ribosomal subunit. Forms a tight complex with proteins S10 and S14.

In terms of biological role, binds the lower part of the 30S subunit head. Binds mRNA in the 70S ribosome, positioning it for translation. The protein is Small ribosomal subunit protein uS3 of Marinobacter nauticus (strain ATCC 700491 / DSM 11845 / VT8) (Marinobacter aquaeolei).